Here is a 94-residue protein sequence, read N- to C-terminus: Integration host factor subunit beta (94 aa).

It belongs to the bacterial histone-like protein family. As to quaternary structure, heterodimer of an alpha and a beta chain.

This protein is one of the two subunits of integration host factor, a specific DNA-binding protein that functions in genetic recombination as well as in transcriptional and translational control. This Sodalis glossinidius (strain morsitans) protein is Integration host factor subunit beta.